The primary structure comprises 733 residues: Ferric aerobactin receptor (733 aa).

The first 25 residues, 1–25 (MMISKKYTLWALNPLLLTMMAPAVA), serve as a signal peptide directing secretion. The TonB box motif lies at 31–38 (ETFVVSAN). Positions 43 to 153 (TVAEMAQTTW…TGGLINIVTK (111 aa)) constitute a TBDR plug domain. One can recognise a TBDR beta-barrel domain in the interval 158-733 (ETIMEFEAGT…TFGLNYSVLF (576 aa)). A TonB C-terminal box motif is present at residues 716 to 733 (YDYKGRGRTFGLNYSVLF).

Belongs to the TonB-dependent receptor family.

The protein resides in the cell outer membrane. Receptor for aerobactin. The polypeptide is Ferric aerobactin receptor (iutA) (Klebsiella pneumoniae).